Consider the following 272-residue polypeptide: Small ribosomal subunit biogenesis GTPase RsgA (272 aa).

The 152-residue stretch at 56–207 (KNILIRPKVA…IIDTPGFSSI (152 aa)) folds into the CP-type G domain. Residues 105–108 (TKAD) and 151–159 (GQSGVGKTT) contribute to the GTP site. 4 residues coordinate Zn(2+): Cys230, Cys235, His237, and Cys245.

Belongs to the TRAFAC class YlqF/YawG GTPase family. RsgA subfamily. In terms of assembly, monomer. Associates with 30S ribosomal subunit, binds 16S rRNA. Zn(2+) is required as a cofactor.

It is found in the cytoplasm. Its function is as follows. One of several proteins that assist in the late maturation steps of the functional core of the 30S ribosomal subunit. Helps release RbfA from mature subunits. May play a role in the assembly of ribosomal proteins into the subunit. Circularly permuted GTPase that catalyzes slow GTP hydrolysis, GTPase activity is stimulated by the 30S ribosomal subunit. The polypeptide is Small ribosomal subunit biogenesis GTPase RsgA (Mycoplasmopsis pulmonis (strain UAB CTIP) (Mycoplasma pulmonis)).